Reading from the N-terminus, the 185-residue chain is Ribosome-recycling factor (185 aa).

It belongs to the RRF family.

Its subcellular location is the cytoplasm. Responsible for the release of ribosomes from messenger RNA at the termination of protein biosynthesis. May increase the efficiency of translation by recycling ribosomes from one round of translation to another. This Carboxydothermus hydrogenoformans (strain ATCC BAA-161 / DSM 6008 / Z-2901) protein is Ribosome-recycling factor.